A 751-amino-acid chain; its full sequence is Dachshund homolog 1 (751 aa).

The disordered stretch occupies residues 1–178 (MAVPAALIPP…PSPVENTPQN (178 aa)). Low complexity-rich tracts occupy residues 20-53 (ISTS…SGPT) and 61-74 (ASSA…TVTS). 2 stretches are compositionally biased toward gly residues: residues 75 to 97 (PGGG…GGGS) and 107 to 119 (SSGG…GGGA). The span at 120–156 (SSTPITASTGSSSSSSSSSSSSSSSSSSSSSSSSSSS) shows a compositional bias: low complexity. Residues 167–178 (STPSPVENTPQN) show a composition bias toward polar residues. A DACHbox-N region spans residues 182-268 (KMVDLRGAKV…LISRKDFETL (87 aa)). Residues 182–377 (KMVDLRGAKV…VGSSGGSWDK (196 aa)) are interaction with SIX6 and HDAC3. Disordered regions lie at residues 273–295 (TNAS…PENS), 351–393 (SNNQ…APVA), 467–525 (SPPS…RIPV), and 537–556 (MGLS…AGHD). 2 stretches are compositionally biased toward polar residues: residues 285 to 294 (RTQSVTSPEN) and 351 to 369 (SNNQ…SSVG). At Ser484 the chain carries Phosphoserine. The segment covering 499-517 (SHPSSHRSSSVSSSPARTE) has biased composition (low complexity). Residues 609–689 (SSIETLLTNI…KAKRKLQEAL (81 aa)) are DACHbox-C. Positions 620–699 (GLLKVAIDNA…EFETKRREQA (80 aa)) are interaction with SIN3A. The stretch at 623–711 (KVAIDNARAQ…TLKQAASADS (89 aa)) forms a coiled coil.

Belongs to the DACH/dachshund family. Interacts with SIX1, SIX6 and EYA3. Interacts with NCOR1 and HDAC3 through its N-terminus. Interacts with SIN3A through its C-terminus. Interacts with SMAD3 and SMAD4. As to expression, expressed at higher levels in adult kidney and lung, and at lower levels in brain and testis. Expressed in embryonal kidneys, eyes, cochleae and limb buds.

It localises to the nucleus. Transcription factor that is involved in regulation of organogenesis. Seems to be a regulator of SIX1, SIX6 and probably SIX5. Corepression of precursor cell proliferation in myoblasts by SIX1 is switched to coactivation through recruitment of EYA3 to the SIX1-DACH1 complex. Transcriptional activation also seems to involve association of CREBBP. Seems to act as a corepressor of SIX6 in regulating proliferation by directly repressing cyclin-dependent kinase inhibitors, including the p27Kip1 promoter. Inhibits TGF-beta signaling through interaction with SMAD4 and NCOR1. Binds to chromatin DNA via its DACHbox-N domain. This Mus musculus (Mouse) protein is Dachshund homolog 1 (Dach1).